Here is a 662-residue protein sequence, read N- to C-terminus: Portal protein (662 aa).

Residues 1 to 26 (MHRASANSPLNSVSGSMMWRNQSSGR) show a composition bias toward polar residues. The disordered stretch occupies residues 1 to 35 (MHRASANSPLNSVSGSMMWRNQSSGRRPSKRLSDN).

Belongs to the herpesviridae portal protein family. In terms of assembly, homododecamerizes. Interacts with terminase subunits TRM1 and TRM3.

The protein resides in the virion. It localises to the host nucleus. Forms a portal in the viral capsid through which viral DNA is translocated during DNA packaging. Assembles as a dodecamer at a single fivefold axe of the T=16 icosahedric capsid. Binds to the molecular motor that translocates the viral DNA, termed terminase. This chain is Portal protein (U76), found in Human herpesvirus 6B (strain Z29) (HHV-6 variant B).